Consider the following 797-residue polypeptide: N-acetylneuraminate (7)9-O-acetyltransferase (797 aa).

Residues 1–18 (MAALAYNLGKREINHYFS) are Cytoplasmic-facing. The helical transmembrane segment at 19-39 (VRSAKVLALVAVLLLAACHLA) threads the bilayer. Over 40–313 (SRRYRGNDSC…QPRPPLTLIQ (274 aa)) the chain is Lumenal. Asn46 is a glycosylation site (N-linked (GlcNAc...) asparagine). Catalysis depends on Ser94, which acts as the Acyl-ester intermediate. Asn175 and Asn187 each carry an N-linked (GlcNAc...) asparagine glycan. Catalysis depends on residues Asp270 and His273. A helical membrane pass occupies residues 314 to 334 (KLAACFFTLSIIGYFIFYVIH). Topologically, residues 335–363 (RNAHRKNKPCTDLESGEEKKNIINTPVSS) are cytoplasmic. The chain crosses the membrane as a helical span at residues 364–384 (LEILLQSFCKLGLIMAYFYMC). Topologically, residues 385–395 (DRANLFMKENK) are lumenal. The helical transmembrane segment at 396–416 (FYTHSSFFIPIIYILVLGVFY) threads the bilayer. At 417–439 (NENTKETKVLNREQTDEWKGWMQ) the chain is on the cytoplasmic side. Residues 440-460 (LVILIYHISGASTFLPVYMHI) form a helical membrane-spanning segment. Position 461 (Arg461) is a topological domain, lumenal. Residues 462–482 (VLVAAYLFQTGYGHFSYFWIK) form a helical membrane-spanning segment. Topologically, residues 483–486 (GDFG) are cytoplasmic. The chain crosses the membrane as a helical span at residues 487 to 507 (IHRVCQVLFRLNFLVVVLCIV). The Lumenal portion of the chain corresponds to 508–513 (MDRPYQ). Residues 514-534 (FYYFVPLVTVWFMVIYVTLAL) form a helical membrane-spanning segment. The Cytoplasmic portion of the chain corresponds to 535 to 546 (WPQITQKKANGN). A helical membrane pass occupies residues 547-567 (FFWYLGLLLKLGLLLLCIWFL). Topologically, residues 568-599 (AYSQGAFEKIFSLWPLSKCFELEGSVYEWWFR) are lumenal. Residues 600–620 (WRLDRYVVFHGVLFAFIYLAL) form a helical membrane-spanning segment. The Cytoplasmic portion of the chain corresponds to 621–638 (QRRQILSEGKGEPLFSNK). A helical transmembrane segment spans residues 639–659 (ISNFLLFVSVVSFLTYSIWAS). Residues 660–671 (SCKNKAECNELH) are Lumenal-facing. A helical transmembrane segment spans residues 672–692 (PSVSVVQIVAFILIRNIPGYA). The Cytoplasmic portion of the chain corresponds to 693–698 (RSIYSS). The helical transmembrane segment at 699 to 719 (FFAWFGKISLELFICQYHIWL) threads the bilayer. Residues 720–725 (AADTRG) are Lumenal-facing. Residues 726 to 746 (ILVLIPGNPTLNIIVSTFIFV) form a helical membrane-spanning segment. Over 747–770 (CVAHEISQITTDLAQVVIPKDNPS) the chain is Cytoplasmic. The helical transmembrane segment at 771 to 791 (LFRRLACTIAFFGGVLILSSI) threads the bilayer. Over 792 to 797 (QDKSRL) the chain is Lumenal.

This sequence belongs to the PC-esterase family. CASD1 subfamily. In terms of processing, N-glycosylated. In terms of tissue distribution, ubiquitously expressed.

The protein localises to the golgi apparatus membrane. The catalysed reaction is CMP-N-acetyl-beta-neuraminate + acetyl-CoA = CMP-N-acetyl-9-O-acetyl-beta-neuraminate + CoA. It carries out the reaction a ganglioside GD3 (d18:1(4E)) + acetyl-CoA = a ganglioside Ac-O-7-GD3(d18:1(4E)) + CoA. The enzyme catalyses CMP-N-acetyl-beta-neuraminate + acetyl-CoA = CMP-N-acetyl-7-O-acetyl-beta-neuraminate + CoA. Functionally, key enzyme in the biosynthesis of O-acetylated (O-Ac) sialoglycans such as gangliosides O-AcGD3 and O-AcGD2, which affect various processes such as cell-cell interactions, host-pathogen recognition. Catalyzes the transfer of an acetyl group from a donor, the acetyl-coenzyme-A molecule (acetyl-CoA), to the C7/8/9 OH-position of a sialic acid residue. The primary site of O-acetyl group transfer on sialic acid seems to depend on cell type and can be C7, from which the O-acetyl group could subsequently migrate to the C8 and then to the C9 position, or at C9 with possibility of migrating to the C8 and then to the C7 position. Together with ST8SIA1 (GD3 synthase) it increases the levels of ganglioside Ac-O-7-GD3. Can transfer the acetyl group from acetyl-CoA to free sialate (N-acetylneuraminate, Neu5Ac) in vitro, but has preferred substrate specificity for CMP-activated sialate (CMP-Neu5Ac), resulting in the formation of 9-O-acetylated CMP-Neu5Ac (CMP-Neu5,9Ac2). CMP-Neu5,9Ac2 may be used by sialyltransferases as a sialate donor for glycoconjugate acceptors such as ganglioside GD3. O-acetylation at position C9 of ganglioside GD3 can counteract the pro-apoptotic effects of the ganglioside GD3 in tumor cells. This is N-acetylneuraminate (7)9-O-acetyltransferase from Mus musculus (Mouse).